The sequence spans 304 residues: Small ribosomal subunit biogenesis GTPase RsgA (304 aa).

Residues 78–237 form the CP-type G domain; sequence HSFLTRPPVA…VADTPGFNRP (160 aa). Residues 127-130 and 179-187 each bind GTP; these read TKTD and GPSGVGKSS. Zn(2+) is bound by residues C262, C267, H269, and C275.

It belongs to the TRAFAC class YlqF/YawG GTPase family. RsgA subfamily. In terms of assembly, monomer. Associates with 30S ribosomal subunit, binds 16S rRNA. It depends on Zn(2+) as a cofactor.

The protein localises to the cytoplasm. Its function is as follows. One of several proteins that assist in the late maturation steps of the functional core of the 30S ribosomal subunit. Helps release RbfA from mature subunits. May play a role in the assembly of ribosomal proteins into the subunit. Circularly permuted GTPase that catalyzes slow GTP hydrolysis, GTPase activity is stimulated by the 30S ribosomal subunit. The chain is Small ribosomal subunit biogenesis GTPase RsgA from Synechococcus sp. (strain CC9605).